The chain runs to 224 residues: MSLKQLPTESMPREKLLQRGPQSLSDAELLAIFLRTGTQGMNVLALADLLLRDFGSLRALFCASKEQFCRHKGLGEAKFVQLQAVLEMTQRYLAETLKRGDALTSPQQTKLYLSSVLRDRQREAFYILFLDNQHRVIRDEILFEGTIDAASVYPREVVKRALHHNAAAVILAHNHPSGVAEPSQADRRITDRLRDALGLVEIRVLDHFVVGDGEVVSFAERGWI.

The interval 1–20 (MSLKQLPTESMPREKLLQRG) is disordered. One can recognise an MPN domain in the interval 102 to 224 (ALTSPQQTKL…VVSFAERGWI (123 aa)). Zn(2+) is bound by residues His173, His175, and Asp186. The JAMM motif motif lies at 173 to 186 (HNHPSGVAEPSQAD).

Belongs to the UPF0758 family.

This chain is UPF0758 protein VCM66_0205, found in Vibrio cholerae serotype O1 (strain M66-2).